A 247-amino-acid polypeptide reads, in one-letter code: 1-(5-phosphoribosyl)-5-[(5-phosphoribosylamino)methylideneamino] imidazole-4-carboxamide isomerase (247 aa).

Catalysis depends on Asp16, which acts as the Proton acceptor. Asp135 acts as the Proton donor in catalysis.

It belongs to the HisA/HisF family.

It localises to the cytoplasm. The enzyme catalyses 1-(5-phospho-beta-D-ribosyl)-5-[(5-phospho-beta-D-ribosylamino)methylideneamino]imidazole-4-carboxamide = 5-[(5-phospho-1-deoxy-D-ribulos-1-ylimino)methylamino]-1-(5-phospho-beta-D-ribosyl)imidazole-4-carboxamide. It functions in the pathway amino-acid biosynthesis; L-histidine biosynthesis; L-histidine from 5-phospho-alpha-D-ribose 1-diphosphate: step 4/9. The polypeptide is 1-(5-phosphoribosyl)-5-[(5-phosphoribosylamino)methylideneamino] imidazole-4-carboxamide isomerase (Paenarthrobacter aurescens (strain TC1)).